Here is a 316-residue protein sequence, read N- to C-terminus: MELWNFTLGSGFILVGILNDSGSPELLCATITILYLLALISNGLLLLAITMEARLHMPMYLLLGQLSLMDLLFTSVVTPKALADFLRRENTISFGGCALQMFLALTMGGAEDLLLAFMAYDRYVAICHPLTYMTLMSSRACWLMVATSWILASLSALIYTVYTMHYPFCRAQEIRHLLCEIPHLLKVACADTSRYELMVYVMGVTFLIPSLAAILASYTQILLTVLHMPSNEGRKKALVTCSSHLTVVGMFYGAATFMYVLPSSFHSTRQDNIISVFYTIVTPALNPLIYSLRNKEVMRALRRVLGKYMLPAHSTL.

At 1 to 25 (MELWNFTLGSGFILVGILNDSGSPE) the chain is on the extracellular side. 2 N-linked (GlcNAc...) asparagine glycosylation sites follow: asparagine 5 and asparagine 19. A helical transmembrane segment spans residues 26–49 (LLCATITILYLLALISNGLLLLAI). Topologically, residues 50 to 57 (TMEARLHM) are cytoplasmic. Residues 58 to 79 (PMYLLLGQLSLMDLLFTSVVTP) traverse the membrane as a helical segment. Residues 80 to 100 (KALADFLRRENTISFGGCALQ) are Extracellular-facing. Cysteine 97 and cysteine 189 form a disulfide bridge. The chain crosses the membrane as a helical span at residues 101 to 120 (MFLALTMGGAEDLLLAFMAY). The Cytoplasmic segment spans residues 121–139 (DRYVAICHPLTYMTLMSSR). The chain crosses the membrane as a helical span at residues 140-158 (ACWLMVATSWILASLSALI). The Extracellular segment spans residues 159 to 195 (YTVYTMHYPFCRAQEIRHLLCEIPHLLKVACADTSRY). A helical membrane pass occupies residues 196-219 (ELMVYVMGVTFLIPSLAAILASYT). The Cytoplasmic portion of the chain corresponds to 220-236 (QILLTVLHMPSNEGRKK). The chain crosses the membrane as a helical span at residues 237 to 259 (ALVTCSSHLTVVGMFYGAATFMY). The Extracellular portion of the chain corresponds to 260–272 (VLPSSFHSTRQDN). A helical membrane pass occupies residues 273–292 (IISVFYTIVTPALNPLIYSL). Over 293 to 316 (RNKEVMRALRRVLGKYMLPAHSTL) the chain is Cytoplasmic.

Belongs to the G-protein coupled receptor 1 family.

The protein resides in the cell membrane. Functionally, odorant receptor. This is Olfactory receptor 2AG1 (OR2AG1) from Homo sapiens (Human).